Reading from the N-terminus, the 477-residue chain is Cytochrome P450 716A1 (477 aa).

The helical transmembrane segment at 2-22 threads the bilayer; sequence YMAIMIILFLSSILLSLLLLL. Cysteine 424 lines the heme pocket.

This sequence belongs to the cytochrome P450 family. Requires heme as cofactor.

Its subcellular location is the membrane. Its function is as follows. Possesses triterpene oxidizing activity. Catalyzes the C28 hydroxylation of alpha-amyrin, beta-amyrin, and lupeol, producing uvaol, erythrodiol, and betulin, respectively. Catalyzes the C28 carboxylation of alpha- and beta-amyrin. This chain is Cytochrome P450 716A1, found in Arabidopsis thaliana (Mouse-ear cress).